We begin with the raw amino-acid sequence, 235 residues long: Sugar fermentation stimulation protein homolog (235 aa).

This sequence belongs to the SfsA family.

This chain is Sugar fermentation stimulation protein homolog, found in Azotobacter vinelandii (strain DJ / ATCC BAA-1303).